Consider the following 544-residue polypeptide: CTP synthase (544 aa).

The tract at residues 1–267 is amidoligase domain; sequence MAKFVFITGG…AQRVLQILNL (267 aa). Ser-13 is a CTP binding site. A UTP-binding site is contributed by Ser-13. 14–19 contacts ATP; sequence SIGKGI. Tyr-54 contributes to the L-glutamine binding site. ATP is bound at residue Asp-71. Residues Asp-71 and Glu-141 each coordinate Mg(2+). CTP is bound by residues 148 to 150, 188 to 193, and Lys-224; these read DIE and KTKPTQ. UTP contacts are provided by residues 188–193 and Lys-224; that span reads KTKPTQ. Residues 292–534 enclose the Glutamine amidotransferase type-1 domain; that stretch reads EIAIVGKYVR…IEAALRSRSR (243 aa). Residue Gly-354 coordinates L-glutamine. Catalysis depends on Cys-381, which acts as the Nucleophile; for glutamine hydrolysis. Residues 382 to 385, Glu-405, and Arg-462 each bind L-glutamine; that span reads LGMQ. Active-site residues include His-507 and Glu-509.

Belongs to the CTP synthase family. As to quaternary structure, homotetramer.

The enzyme catalyses UTP + L-glutamine + ATP + H2O = CTP + L-glutamate + ADP + phosphate + 2 H(+). The catalysed reaction is L-glutamine + H2O = L-glutamate + NH4(+). It catalyses the reaction UTP + NH4(+) + ATP = CTP + ADP + phosphate + 2 H(+). It functions in the pathway pyrimidine metabolism; CTP biosynthesis via de novo pathway; CTP from UDP: step 2/2. Allosterically activated by GTP, when glutamine is the substrate; GTP has no effect on the reaction when ammonia is the substrate. The allosteric effector GTP functions by stabilizing the protein conformation that binds the tetrahedral intermediate(s) formed during glutamine hydrolysis. Inhibited by the product CTP, via allosteric rather than competitive inhibition. Its function is as follows. Catalyzes the ATP-dependent amination of UTP to CTP with either L-glutamine or ammonia as the source of nitrogen. Regulates intracellular CTP levels through interactions with the four ribonucleotide triphosphates. The sequence is that of CTP synthase from Synechococcus sp. (strain JA-3-3Ab) (Cyanobacteria bacterium Yellowstone A-Prime).